The sequence spans 361 residues: Phosphoserine aminotransferase (361 aa).

R42 contributes to the L-glutamate binding site. Residues 76–77 (AT), W102, T152, D172, and Q195 contribute to the pyridoxal 5'-phosphate site. N6-(pyridoxal phosphate)lysine is present on K196. 237-238 (NT) contributes to the pyridoxal 5'-phosphate binding site.

It belongs to the class-V pyridoxal-phosphate-dependent aminotransferase family. SerC subfamily. In terms of assembly, homodimer. Requires pyridoxal 5'-phosphate as cofactor.

Its subcellular location is the cytoplasm. It carries out the reaction O-phospho-L-serine + 2-oxoglutarate = 3-phosphooxypyruvate + L-glutamate. It catalyses the reaction 4-(phosphooxy)-L-threonine + 2-oxoglutarate = (R)-3-hydroxy-2-oxo-4-phosphooxybutanoate + L-glutamate. Its pathway is amino-acid biosynthesis; L-serine biosynthesis; L-serine from 3-phospho-D-glycerate: step 2/3. It participates in cofactor biosynthesis; pyridoxine 5'-phosphate biosynthesis; pyridoxine 5'-phosphate from D-erythrose 4-phosphate: step 3/5. In terms of biological role, catalyzes the reversible conversion of 3-phosphohydroxypyruvate to phosphoserine and of 3-hydroxy-2-oxo-4-phosphonooxybutanoate to phosphohydroxythreonine. This chain is Phosphoserine aminotransferase, found in Stenotrophomonas maltophilia (strain R551-3).